A 391-amino-acid polypeptide reads, in one-letter code: Probable sugar efflux transporter (391 aa).

12 helical membrane-spanning segments follow: residues 16–36, 51–71, 82–102, 110–130, 138–158, 170–190, 210–230, 247–267, 277–297, 300–320, 338–358, and 361–381; these read VFVF…PVAL, VGLM…PLML, LLFL…AWNF, MGIA…VIRV, QALG…LPLG, TFGV…KLLP, PLLM…FTTY, ITTL…FLFG, FIAF…VFKN, WVVF…GISL, IYSG…SIVI, and LGLG…LFWL.

The protein belongs to the major facilitator superfamily. SotB (TC 2.A.1.2) family.

The protein resides in the cell inner membrane. Its function is as follows. Involved in the efflux of sugars. The physiological role may be the reduction of the intracellular concentration of toxic sugars or sugar metabolites. In Helicobacter pylori (strain ATCC 700392 / 26695) (Campylobacter pylori), this protein is Probable sugar efflux transporter.